The following is a 351-amino-acid chain: Small ribosomal subunit protein uS2 (351 aa).

The interval 302 to 351 (QNNYDPSKRGYNPKYVNHKSTFNKFNNKKPAEATSQAKTNEKIVIKAETN) is disordered. Positions 340–351 (TNEKIVIKAETN) are enriched in basic and acidic residues.

Belongs to the universal ribosomal protein uS2 family.

This chain is Small ribosomal subunit protein uS2, found in Ureaplasma urealyticum serovar 10 (strain ATCC 33699 / Western).